Consider the following 136-residue polypeptide: Invertebrate-type lysozyme (136 aa).

The first 11 residues, 1–11, serve as a signal peptide directing secretion; it reads METVSVEEGLD. The I-type lysozyme domain occupies 14-130; sequence PGMVSQKCLL…WELLQKIPGC (117 aa). Intrachain disulfides connect Cys21-Cys98, Cys24-Cys130, Cys26-Cys33, Cys38-Cys47, Cys60-Cys80, Cys70-Cys76, and Cys94-Cys112. Glu29 acts as the Proton donor in catalysis. Asp41 acts as the Nucleophile in catalysis. Substrate is bound at residue 53 to 59; it reads KQPYWID. N-linked (GlcNAc...) asparagine glycosylation occurs at Asn75. Substrate contacts are provided by residues Tyr84, Tyr92, 105–107, and Lys119; that span reads HNG.

As to quaternary structure, homodimer in its autoinhibited state. Active as monomer.

It is found in the secreted. It catalyses the reaction Hydrolysis of (1-&gt;4)-beta-linkages between N-acetylmuramic acid and N-acetyl-D-glucosamine residues in a peptidoglycan and between N-acetyl-D-glucosamine residues in chitodextrins.. With respect to regulation, chitinase activity is activated by high salt concentrations which cause the release of the monomer from the autoinhibited homodimer. Bacteriolytic activity against Gram-positive bacterium M.luteus and thereby probably protects against bacterial infection. Also has chitinase activity. May act as an ispopeptidase, cleaving isopeptide bonds between the side chains of Lys and Gln residues in proteins or in the cross-linking peptide of peptidoglycan in bacterial cell walls. The protein is Invertebrate-type lysozyme of Ruditapes philippinarum (Japanese carpet shell).